The sequence spans 867 residues: Alanine--tRNA ligase (867 aa).

Zn(2+) is bound by residues His-559, His-563, Cys-661, and His-665.

It belongs to the class-II aminoacyl-tRNA synthetase family. Requires Zn(2+) as cofactor.

It is found in the cytoplasm. The catalysed reaction is tRNA(Ala) + L-alanine + ATP = L-alanyl-tRNA(Ala) + AMP + diphosphate. Catalyzes the attachment of alanine to tRNA(Ala) in a two-step reaction: alanine is first activated by ATP to form Ala-AMP and then transferred to the acceptor end of tRNA(Ala). Also edits incorrectly charged Ser-tRNA(Ala) and Gly-tRNA(Ala) via its editing domain. This chain is Alanine--tRNA ligase, found in Aquifex aeolicus (strain VF5).